The sequence spans 278 residues: Tryptophan synthase alpha chain (278 aa).

Residues glutamate 50 and aspartate 61 each act as proton acceptor in the active site.

This sequence belongs to the TrpA family. Tetramer of two alpha and two beta chains.

It catalyses the reaction (1S,2R)-1-C-(indol-3-yl)glycerol 3-phosphate + L-serine = D-glyceraldehyde 3-phosphate + L-tryptophan + H2O. The protein operates within amino-acid biosynthesis; L-tryptophan biosynthesis; L-tryptophan from chorismate: step 5/5. In terms of biological role, the alpha subunit is responsible for the aldol cleavage of indoleglycerol phosphate to indole and glyceraldehyde 3-phosphate. The protein is Tryptophan synthase alpha chain of Rhodopseudomonas palustris (strain ATCC BAA-98 / CGA009).